The chain runs to 89 residues: Small ribosomal subunit protein uS17 (89 aa).

This sequence belongs to the universal ribosomal protein uS17 family. As to quaternary structure, part of the 30S ribosomal subunit.

Its function is as follows. One of the primary rRNA binding proteins, it binds specifically to the 5'-end of 16S ribosomal RNA. This is Small ribosomal subunit protein uS17 from Xylella fastidiosa (strain M12).